Consider the following 253-residue polypeptide: 2-dehydro-3-deoxy-D-gluconate 5-dehydrogenase (253 aa).

An NAD(+)-binding site is contributed by 14-38 (LITGCDTGLGQGMAVGLAEAGCDIV). Ser145 lines the substrate pocket. Tyr158 serves as the catalytic Proton acceptor.

The protein belongs to the short-chain dehydrogenases/reductases (SDR) family.

The catalysed reaction is 2-dehydro-3-deoxy-D-gluconate + NAD(+) = 3-deoxy-D-glycero-2,5-hexodiulosonate + NADH + H(+). The protein operates within glycan metabolism; pectin degradation; 2-dehydro-3-deoxy-D-gluconate from pectin: step 5/5. Its function is as follows. Catalyzes the reduction of 2,5-diketo-3-deoxygluconate (DKII or 4,6-dihydroxy-2,5-dioxohexanoate) into 2-keto-3-deoxygluconate (KDG or 2-dehydro-3-deoxygluconate) with a concomitant oxidation of NADH. This Dickeya dadantii (strain 3937) (Erwinia chrysanthemi (strain 3937)) protein is 2-dehydro-3-deoxy-D-gluconate 5-dehydrogenase (kduD).